The chain runs to 267 residues: Trehalose-phosphate phosphatase (267 aa).

The active-site Nucleophile is D20. The Mg(2+) site is built by D20, D22, and D198. Substrate is bound at residue 20–22; that stretch reads DLD.

The protein belongs to the trehalose phosphatase family. Mg(2+) is required as a cofactor.

The catalysed reaction is alpha,alpha-trehalose 6-phosphate + H2O = alpha,alpha-trehalose + phosphate. It participates in glycan biosynthesis; trehalose biosynthesis. Its function is as follows. Removes the phosphate from trehalose 6-phosphate to produce free trehalose. In Salmonella typhimurium (strain SL1344), this protein is Trehalose-phosphate phosphatase (otsB).